A 556-amino-acid polypeptide reads, in one-letter code: Potassium-transporting ATPase potassium-binding subunit (556 aa).

The next 10 membrane-spanning stretches (helical) occupy residues 1-21, 60-80, 130-150, 173-193, 245-265, 281-301, 374-394, 416-436, 482-502, and 529-549; these read MTWICFLAGLALLAIALGIAQ, SYARAVLAFSFCGVVFLYALQ, GLCVQNFVSAATGIAIAVALI, LRILMPIAAVAAFLLIAGGAV, PQPWTNMLEIFLILLIPFSLP, ILAAMVVLFTVNLCAMAAAEF, GLYGMLVIAVIAVFIAGLLVG, ILVMPTLVLCGVALSLAVPGL, AALGAAMLLGRFVPIILILAL, and LIVFTAILVTALVFFPVLTLG.

It belongs to the KdpA family. The system is composed of three essential subunits: KdpA, KdpB and KdpC.

The protein localises to the cell membrane. In terms of biological role, part of the high-affinity ATP-driven potassium transport (or Kdp) system, which catalyzes the hydrolysis of ATP coupled with the electrogenic transport of potassium into the cytoplasm. This subunit binds the extracellular potassium ions and delivers the ions to the membrane domain of KdpB through an intramembrane tunnel. The polypeptide is Potassium-transporting ATPase potassium-binding subunit (Cutibacterium acnes (strain DSM 16379 / KPA171202) (Propionibacterium acnes)).